We begin with the raw amino-acid sequence, 305 residues long: Probable 2-methylisocitrate lyase 1 (305 aa).

52–54 (SGA) contributes to the substrate binding site. Residues Asp-91 and Asp-93 each contribute to the Mg(2+) site. Substrate is bound by residues 128–129 (CG), Arg-163, Glu-193, 216–218 (NMT), Arg-247, and Arg-276.

This sequence belongs to the isocitrate lyase/PEP mutase superfamily. Methylisocitrate lyase family. Homotetramer; dimer of dimers. Mg(2+) is required as a cofactor.

It catalyses the reaction (2S,3R)-3-hydroxybutane-1,2,3-tricarboxylate = pyruvate + succinate. Functionally, catalyzes the thermodynamically favored C-C bond cleavage of (2R,3S)-2-methylisocitrate to yield pyruvate and succinate via an alpha-carboxy-carbanion intermediate. The sequence is that of Probable 2-methylisocitrate lyase 1 from Corynebacterium glutamicum (strain ATCC 13032 / DSM 20300 / JCM 1318 / BCRC 11384 / CCUG 27702 / LMG 3730 / NBRC 12168 / NCIMB 10025 / NRRL B-2784 / 534).